Consider the following 504-residue polypeptide: Pup--protein ligase (504 aa).

Glu-30 is a binding site for Mg(2+). Residue Arg-74 participates in ATP binding. Tyr-76 contributes to the Mg(2+) binding site. Catalysis depends on Asp-78, which acts as the Proton acceptor. Glu-84 lines the Mg(2+) pocket. ATP contacts are provided by Thr-87 and Trp-459.

It belongs to the Pup ligase/Pup deamidase family. Pup-conjugating enzyme subfamily.

The catalysed reaction is ATP + [prokaryotic ubiquitin-like protein]-L-glutamate + [protein]-L-lysine = ADP + phosphate + N(6)-([prokaryotic ubiquitin-like protein]-gamma-L-glutamyl)-[protein]-L-lysine.. It functions in the pathway protein degradation; proteasomal Pup-dependent pathway. The protein operates within protein modification; protein pupylation. In terms of biological role, catalyzes the covalent attachment of the prokaryotic ubiquitin-like protein modifier Pup to the proteasomal substrate proteins, thereby targeting them for proteasomal degradation. This tagging system is termed pupylation. The ligation reaction involves the side-chain carboxylate of the C-terminal glutamate of Pup and the side-chain amino group of a substrate lysine. In Corynebacterium urealyticum (strain ATCC 43042 / DSM 7109), this protein is Pup--protein ligase.